Here is a 78-residue protein sequence, read N- to C-terminus: uncharacterized protein (78 aa).

2 consecutive transmembrane segments (helical) span residues 13 to 35 and 50 to 72; these read AGVGCVLMLMIIALVVFMLPTGI and GTTFGILMLAALPPLTGAIFYYF.

Its subcellular location is the cell membrane. This is an uncharacterized protein from Pasteurella multocida (strain Pm70).